The sequence spans 937 residues: Isoleucine--tRNA ligase (937 aa).

The short motif at 58-68 is the 'HIGH' region element; the sequence is PYANGSIHIGH. Glu561 provides a ligand contact to L-isoleucyl-5'-AMP. The short motif at 602–606 is the 'KMSKS' region element; sequence KMSKS. Lys605 is an ATP binding site. Zn(2+)-binding residues include Cys900, Cys903, Cys920, and Cys923.

It belongs to the class-I aminoacyl-tRNA synthetase family. IleS type 1 subfamily. Monomer. It depends on Zn(2+) as a cofactor.

It localises to the cytoplasm. It catalyses the reaction tRNA(Ile) + L-isoleucine + ATP = L-isoleucyl-tRNA(Ile) + AMP + diphosphate. Catalyzes the attachment of isoleucine to tRNA(Ile). As IleRS can inadvertently accommodate and process structurally similar amino acids such as valine, to avoid such errors it has two additional distinct tRNA(Ile)-dependent editing activities. One activity is designated as 'pretransfer' editing and involves the hydrolysis of activated Val-AMP. The other activity is designated 'posttransfer' editing and involves deacylation of mischarged Val-tRNA(Ile). The chain is Isoleucine--tRNA ligase from Pectobacterium atrosepticum (strain SCRI 1043 / ATCC BAA-672) (Erwinia carotovora subsp. atroseptica).